A 668-amino-acid chain; its full sequence is tRNA 5-methylaminomethyl-2-thiouridine biosynthesis bifunctional protein MnmC (668 aa).

Residues 1–245 (MKHYSIQPAN…KREMLCGVME (245 aa)) are tRNA (mnm(5)s(2)U34)-methyltransferase. An FAD-dependent cmnm(5)s(2)U34 oxidoreductase region spans residues 270–668 (IGGGIACALL…LLKGKAVKAG (399 aa)).

In the N-terminal section; belongs to the methyltransferase superfamily. tRNA (mnm(5)s(2)U34)-methyltransferase family. It in the C-terminal section; belongs to the DAO family. It depends on FAD as a cofactor.

The protein localises to the cytoplasm. The enzyme catalyses 5-aminomethyl-2-thiouridine(34) in tRNA + S-adenosyl-L-methionine = 5-methylaminomethyl-2-thiouridine(34) in tRNA + S-adenosyl-L-homocysteine + H(+). In terms of biological role, catalyzes the last two steps in the biosynthesis of 5-methylaminomethyl-2-thiouridine (mnm(5)s(2)U) at the wobble position (U34) in tRNA. Catalyzes the FAD-dependent demodification of cmnm(5)s(2)U34 to nm(5)s(2)U34, followed by the transfer of a methyl group from S-adenosyl-L-methionine to nm(5)s(2)U34, to form mnm(5)s(2)U34. This is tRNA 5-methylaminomethyl-2-thiouridine biosynthesis bifunctional protein MnmC from Shigella boydii serotype 4 (strain Sb227).